We begin with the raw amino-acid sequence, 343 residues long: Versiconal hemiacetal acetate reductase (343 aa).

Catalysis depends on Tyr59, which acts as the Proton donor. Position 144 (His144) interacts with substrate. Residue 229–239 (SPVARGALARP) participates in NADP(+) binding.

It belongs to the aldo/keto reductase family. Aldo/keto reductase 2 subfamily.

It catalyses the reaction (2S)-versicolorone + NADP(+) = 1'-hydroxyversicolorone + NADPH + H(+). It carries out the reaction (3S)-versiconol acetate + NADP(+) = (2S,3S)-versiconal hemiacetal acetate + NADPH + H(+). The enzyme catalyses (S)-versiconol + NADP(+) = (2S-3S)-versiconal hemiacetal + NADPH + H(+). In terms of biological role, catalyzes 3 reactions: from hydroxyversicolorone (HVN) to versicolorone (VONE), from versiconal hemiacetal acetate (VHA) to versiconol acetate (VOAc) and from versiconal (VHOH) to versiconol (VOH). Probably not an aflatoxin biosynthesis gene: may be involved in the vertical branching steps connecting the main pathway from HVN to VHOH with the side pathway from VONE to VOH. This is Versiconal hemiacetal acetate reductase (vrdA) from Aspergillus parasiticus.